A 237-amino-acid chain; its full sequence is UPF0502 protein HEAR1280 (237 aa).

The span at M1–S13 shows a compositional bias: polar residues. The disordered stretch occupies residues M1–A21.

It belongs to the UPF0502 family.

The protein is UPF0502 protein HEAR1280 of Herminiimonas arsenicoxydans.